A 130-amino-acid polypeptide reads, in one-letter code: Transcription antitermination protein NusB (130 aa).

The protein belongs to the NusB family.

Its function is as follows. Involved in transcription antitermination. Required for transcription of ribosomal RNA (rRNA) genes. Binds specifically to the boxA antiterminator sequence of the ribosomal RNA (rrn) operons. The protein is Transcription antitermination protein NusB of Bacillus mycoides (strain KBAB4) (Bacillus weihenstephanensis).